Here is a 270-residue protein sequence, read N- to C-terminus: 4-hydroxy-tetrahydrodipicolinate reductase (270 aa).

Residues 11–16 and Glu37 each bind NAD(+); that span reads GCNGRM. Position 38 (Arg38) interacts with NADP(+). Residues 101–103 and 125–128 contribute to the NAD(+) site; these read GTT and ASNY. The active-site Proton donor/acceptor is the His158. A (S)-2,3,4,5-tetrahydrodipicolinate-binding site is contributed by His159. Lys162 functions as the Proton donor in the catalytic mechanism. 168–169 contributes to the (S)-2,3,4,5-tetrahydrodipicolinate binding site; it reads GT.

Belongs to the DapB family.

The protein resides in the cytoplasm. The catalysed reaction is (S)-2,3,4,5-tetrahydrodipicolinate + NAD(+) + H2O = (2S,4S)-4-hydroxy-2,3,4,5-tetrahydrodipicolinate + NADH + H(+). It carries out the reaction (S)-2,3,4,5-tetrahydrodipicolinate + NADP(+) + H2O = (2S,4S)-4-hydroxy-2,3,4,5-tetrahydrodipicolinate + NADPH + H(+). Its pathway is amino-acid biosynthesis; L-lysine biosynthesis via DAP pathway; (S)-tetrahydrodipicolinate from L-aspartate: step 4/4. Catalyzes the conversion of 4-hydroxy-tetrahydrodipicolinate (HTPA) to tetrahydrodipicolinate. The polypeptide is 4-hydroxy-tetrahydrodipicolinate reductase (Aeromonas salmonicida (strain A449)).